We begin with the raw amino-acid sequence, 298 residues long: Centromere protein O (298 aa).

The disordered stretch occupies residues 29-49; the sequence is NISNRKSEEPAVRKKESSLRT. Over residues 33–49 the composition is skewed to basic and acidic residues; the sequence is RKSEEPAVRKKESSLRT. Residue S35 is modified to Phosphoserine. A coiled-coil region spans residues 39 to 74; sequence AVRKKESSLRTKIRELRQQRDKLRAEVKQWGARVKE.

This sequence belongs to the CENP-O/MCM21 family. In terms of assembly, component of the CENPA-CAD complex, composed of CENPI, CENPK, CENPL, CENPO, CENPP, CENPQ, CENPR and CENPS. The CENPA-CAD complex interacts with the CENPA-NAC complex, at least composed of CENPA, CENPC, CENPH, CENPM, CENPN, CENPT and CENPU.

The protein localises to the nucleus. The protein resides in the chromosome. Its subcellular location is the centromere. It localises to the kinetochore. Its function is as follows. Component of the CENPA-CAD (nucleosome distal) complex, a complex recruited to centromeres which is involved in assembly of kinetochore proteins, mitotic progression and chromosome segregation. May be involved in incorporation of newly synthesized CENPA into centromeres via its interaction with the CENPA-NAC complex. Modulates the kinetochore-bound levels of NDC80 complex. This Mus musculus (Mouse) protein is Centromere protein O (Cenpo).